We begin with the raw amino-acid sequence, 270 residues long: Palmitoyltransferase ZDHHC12-A (270 aa).

The Cytoplasmic portion of the chain corresponds to 1 to 8; sequence MNKSLFKS. Residues 9-29 traverse the membrane as a helical segment; the sequence is GCLVRTAHVILTWIITLILFL. At 30 to 45 the chain is on the lumenal side; the sequence is HNTDLRRCQERGDLLQ. A helical membrane pass occupies residues 46–66; the sequence is PLVFSSVLLLSVLLYFTVSLM. Residues 67–145 lie on the Cytoplasmic side of the membrane; it reads DPGFVLSDSQ…DNCVGELNHR (79 aa). Positions 102–152 constitute a DHHC domain; it reads RRCGYCFLLQPMRARHCKWCKRCVRRFDHHCPWIDNCVGELNHRWFLLYLC. Catalysis depends on Cys132, which acts as the S-palmitoyl cysteine intermediate. The chain crosses the membrane as a helical span at residues 146-166; sequence WFLLYLCVQFTAVCWGLQSAW. Over 167–182 the chain is Lumenal; it reads SGFISAPSWQQWFTQN. A helical membrane pass occupies residues 183 to 203; that stretch reads VFLLVAFAVTAVFSVVLLLLL. Residues 204-270 are Cytoplasmic-facing; sequence CIHAYLASVN…MYIRHNNASV (67 aa).

It belongs to the DHHC palmitoyltransferase family.

The protein localises to the golgi apparatus membrane. It is found in the endoplasmic reticulum membrane. The enzyme catalyses L-cysteinyl-[protein] + hexadecanoyl-CoA = S-hexadecanoyl-L-cysteinyl-[protein] + CoA. Palmitoyltransferase that catalyzes the addition of palmitate onto various protein substrates. Has a palmitoyltransferase activity toward gephyrin/GPHN, regulating its clustering at synapses and its function in gamma-aminobutyric acid receptor clustering. Acts as an inhibitor of the NLRP3 inflammasome by mediating palmitoylation of NLRP3, thereby promoting NLRP3 degradation by the chaperone-mediated autophagy (CMA) process. This Danio rerio (Zebrafish) protein is Palmitoyltransferase ZDHHC12-A.